The following is a 278-amino-acid chain: MDVRQSIHSEHAKTLDTQTLRREFLIENIFVADEYTMVYSHIDRIIVGGIMPVSHSVEIGGEVGKQLGVSRLLDRRELGVINIGGAGAIIVDGQRHDIGHRDALYIGKGAKELVFVSNEASRPAKFYYNCAPAHTAYPTKKVSPADVAPVTLGDNLTSNRRTINKYFVPDVLETCQLSMGLTELAPGNLWNTMPCHTHERRMEVYLYFNMEEDSCVFHMMGQPQETRHIVMRNEQAVISPSWSIHSGVGTKAYTFIWGMVGENQVFDDMDHVAVQDLR.

4 residues coordinate Zn(2+): His196, His198, Glu203, and His245.

The protein belongs to the KduI family. Zn(2+) serves as cofactor.

The catalysed reaction is 5-dehydro-4-deoxy-D-glucuronate = 3-deoxy-D-glycero-2,5-hexodiulosonate. Its pathway is glycan metabolism; pectin degradation; 2-dehydro-3-deoxy-D-gluconate from pectin: step 4/5. Its function is as follows. Catalyzes the isomerization of 5-dehydro-4-deoxy-D-glucuronate to 3-deoxy-D-glycero-2,5-hexodiulosonate. In Salmonella heidelberg (strain SL476), this protein is 4-deoxy-L-threo-5-hexosulose-uronate ketol-isomerase.